A 585-amino-acid polypeptide reads, in one-letter code: Polyadenylate-binding protein, cytoplasmic and nuclear (585 aa).

The disordered stretch occupies residues 14 to 37; it reads QLKIEEQTAPTTTESETPKVETSG. RRM domains are found at residues 38–116, 126–203, 219–296, and 322–399; these read ASLY…WSQR, GNIY…LHVS, TNVY…RAQK, and VNLF…IAQR. One can recognise a PABC domain in the interval 488 to 567; it reads GQFPRNGQQQ…AHAAYQKFKE (80 aa).

Belongs to the polyadenylate-binding protein type-1 family.

It is found in the cytoplasm. Its subcellular location is the nucleus. Its function is as follows. Binds the poly(A) tail of mRNA. Appears to be an important mediator of the multiple roles of the poly(A) tail in mRNA biogenesis, stability and translation. In the nucleus, involved in both mRNA cleavage and polyadenylation. Is also required for efficient mRNA export to the cytoplasm. Acts in concert with a poly(A)-specific nuclease (PAN) to affect poly(A) tail shortening, which may occur concomitantly with either nucleocytoplasmic mRNA transport or translational initiation. In the cytoplasm, stimulates translation initiation and regulates mRNA decay through translation termination-coupled poly(A) shortening, probably mediated by PAN. In Eremothecium gossypii (strain ATCC 10895 / CBS 109.51 / FGSC 9923 / NRRL Y-1056) (Yeast), this protein is Polyadenylate-binding protein, cytoplasmic and nuclear (PAB1).